The sequence spans 307 residues: Yop proteins translocation protein Q (307 aa).

This sequence belongs to the FliN/MopA/SpaO family.

Its function is as follows. Component of the Yop secretion machinery. The chain is Yop proteins translocation protein Q (yscQ) from Yersinia pestis.